Consider the following 601-residue polypeptide: Probable cytochrome P450 525A1 (601 aa).

Residues 12–32 (ISYFLTCSIFGFILWILTEQI) form a helical membrane-spanning segment. The disordered stretch occupies residues 205-253 (NNNNNNNNNNNNNNNNNNNNNNNNNNNNNNNNNNNNNNNNNNNNNNNNN). Cys-544 is a heme binding site.

The protein belongs to the cytochrome P450 family. Heme serves as cofactor.

Its subcellular location is the membrane. The polypeptide is Probable cytochrome P450 525A1 (cyp525A1) (Dictyostelium discoideum (Social amoeba)).